Here is a 54-residue protein sequence, read N- to C-terminus: Ovomucoid (54 aa).

In terms of domain architecture, Kazal-like spans 4 to 54 (VDCSGYPTHACTLELKPLCGSDNQTYSNKCGFCNAVAQSNGTLTLSHFGKC). 3 disulfide bridges follow: C6/C36, C14/C33, and C22/C54. N43 is a glycosylation site (N-linked (GlcNAc...) asparagine).

Its subcellular location is the secreted. The sequence is that of Ovomucoid from Leipoa ocellata (Malleefowl).